Reading from the N-terminus, the 102-residue chain is Small ribosomal subunit protein uS10 (102 aa).

This sequence belongs to the universal ribosomal protein uS10 family. In terms of assembly, part of the 30S ribosomal subunit.

In terms of biological role, involved in the binding of tRNA to the ribosomes. The chain is Small ribosomal subunit protein uS10 from Thermotoga neapolitana (strain ATCC 49049 / DSM 4359 / NBRC 107923 / NS-E).